The following is a 1357-amino-acid chain: MSAGTSATGPRRGPPGLEEATSKKKQKDRANQESKDGDPRRVSMPRKEPTKDELLLDWRQSSDKVVVKLRVGTGPICLEEVDAAFTDTDCVVRLPDGRQWGGVFFAKIQSSCTKVQTRKGGLLQLALPKKVPLLTWPSLLKKPLGTQELVPGLRCQENGQELSPIALEPGSEPRRAKQEARNQKRAQGRGEVGSGASPGAQAGPSAKRAVHLCRGPEGEGSMDGPGPQGDAPSFLSDSATQVEAEEQLHVPPVNPQTSLLGSEKNLALLTVEKTVSPRSDSVSPVMIRNRDPEKDDHFKEEMAVGADPAALADEPESMVNLAFVKNDSYEKGPDSVVVHVYVKESRRDTSRVLFREQDFTLIFQTRDGNFLRLHPGCGPHTIFRWQVKLRNLIEPEQCTFCFTASRIDICLRKRQSQRWGGLEAPATRVGGAKVAVPTGPTPLDSTPPGGGPLPLTGQEEARAVEKEKPKARSEDSGLDGVVARTPLEHVTPKPEPHLASPKPTCMVPPMPHSPVSGDSVEEDEEEEKKVCLPGFTGLVNLGNTCFMNSVIQSLSNTRELRDFFHDRSFEAEINYNNPLGTGGRLAIGFAVLLRALWKGTHQAFQPSKLKAIVASKASQFTGYAQHDAQEFMAFLLDGLHEDLNRIQNKPYTETVDSDGRPDEVVAEEAWQRHKMRNDSFIVDLFQGQYKSKLVCPVCAKVSITFDPFLYLPVPLPQKQKVLPIYYFAREPHSKPIKFLVSVSKENSSASEVLESLSQSVHVKPESLRLAEVIKNRFHRVFLPSHSLDAVSPTDVLLCFELLSPELAKERVVVLEVQQRPQVPSIPISKCAACQRKQQSEDEKLKRCTRCYRVGYCNQFCQKTHWPDHKGLCRPENIGYPFLVSVPASRLTYARLAQLLEGYARYSVSVFQPPFQPGRMALESQSPGCTTLLSTSSLEAGDSEREPIQPSELQLVTPVAEGDTGAHRMWPPADRGPVPSTSGISSEMLASGPMEGCSLLAGERVSRPEAAVPGYQHSRESVSAHTPQFFIYKIDASSREQRLEDKGDTPLELGDDCSLALVWRNNERLQEFVLVASKELECAEDPGSAGEAARAGHFTLDQCLNLFTRPEVLAPEEAWYCPQCKQHREASKQLLLWRLPNVLIVQLKRFSFRSFIWRDKINDLVEFPVRNLDLSKFCIGQKEEQLPSYDLYAVINHYGGMIGGHYTACARLPSDRSSQRSDVGWRLFDDSTVTTVDESQVVTRYAYVLFYRRRNSPVERPPRAAHAEHHPDLGPAAEAAASQASRIWQELEAEEEMVPEGPGPLGPWGPQDWVGPPPRGPTTSDEGCLRYFVLGTVAALVALVLNVFYPLVSQSRWR.

Disordered stretches follow at residues 1 to 52 (MSAG…PTKD), 162 to 239 (LSPI…SDSA), and 275 to 296 (VSPR…EKDD). Residues 1 to 1330 (MSAGTSATGP…TTSDEGCLRY (1330 aa)) are Cytoplasmic-facing. Composition is skewed to basic and acidic residues over residues 28–52 (DRAN…PTKD) and 171–182 (SEPRRAKQEARN). Positions 51 to 140 (KDELLLDWRQ…VPLLTWPSLL (90 aa)) constitute a CS 1 domain. Residues 194–206 (SGASPGAQAGPSA) show a composition bias toward low complexity. 2 positions are modified to phosphoserine: Ser-221 and Ser-283. Residues 321–423 (LAFVKNDSYE…RQSQRWGGLE (103 aa)) form the CS 2 domain. The interval 432–479 (AKVAVPTGPTPLDSTPPGGGPLPLTGQEEARAVEKEKPKARSEDSGLD) is disordered. Residues 437-457 (PTGPTPLDSTPPGGGPLPLTG) show a composition bias toward low complexity. Positions 459-475 (EEARAVEKEKPKARSED) are enriched in basic and acidic residues. A USP domain is found at 536–1253 (TGLVNLGNTC…YAYVLFYRRR (718 aa)). Cys-545 acts as the Nucleophile in catalysis. Zn(2+) contacts are provided by Cys-830, Cys-833, Cys-847, Cys-850, Cys-856, Cys-860, His-868, and Cys-872. An MYND-type zinc finger spans residues 830–872 (CAACQRKQQSEDEKLKRCTRCYRVGYCNQFCQKTHWPDHKGLC). The disordered stretch occupies residues 962-981 (DTGAHRMWPPADRGPVPSTS). His-1204 serves as the catalytic Proton acceptor. Positions 1259-1271 (RPPRAAHAEHHPD) are enriched in basic and acidic residues. Disordered stretches follow at residues 1259 to 1278 (RPPR…AAEA) and 1292 to 1320 (AEEE…PRGP). A helical membrane pass occupies residues 1331-1351 (FVLGTVAALVALVLNVFYPLV). The Lumenal segment spans residues 1352-1357 (SQSRWR).

In terms of assembly, interacts with RNF123. Interacts with BIRC2/c-IAP1, BIRC3/c-IAP2 and XIAP/BIRC4. Interacts with HIF1A (via N-terminus). Expressed in testis, heart, kidney and skeletal muscle. Low levels of expression are detectable in all other tissues screened.

Its subcellular location is the endoplasmic reticulum membrane. The enzyme catalyses Thiol-dependent hydrolysis of ester, thioester, amide, peptide and isopeptide bonds formed by the C-terminal Gly of ubiquitin (a 76-residue protein attached to proteins as an intracellular targeting signal).. Its function is as follows. Deubiquitinating enzyme that regulates the degradation of various proteins by removing ubiquitin moieties, thereby preventing their proteasomal degradation. Stabilizes RNF123, which promotes CDKN1B degradation and contributes to cell proliferation. Decreases the levels of ubiquitinated proteins during skeletal muscle formation and acts to repress myogenesis. Modulates transcription of major myofibrillar proteins. Also involved in turnover of endoplasmic-reticulum-associated degradation (ERAD) substrates. Mechanistically, deubiquitinates and thereby stabilizes several E3 ligases involved in the ERAD pathway including SYVN1 or MARCHF6. Regulates the stability of other E3 ligases including BIRC2/c-IAP1 and BIRC3/c-IAP2 by preventing their ubiquitination. Required for cells to mount an appropriate response to hypoxia by rescuing HIF1A from degradation in a non-catalytic manner and by mediating the deubiquitination of FUNDC1. Attenuates mitochondrial damage and ferroptosis by targeting and stabilizing NADPH oxidase 4/NOX4. Negatively regulates TNF-alpha- and IL-1beta-triggered NF-kappa-B activation by hydrolyzing 'Lys-27'- and 'Lys-63'-linked polyubiquitin chains from MAP3K7. Modulates also the protein level and aggregation of polyQ-expanded huntingtin/HTT through HSP90AA1. This Rattus norvegicus (Rat) protein is Ubiquitin carboxyl-terminal hydrolase 19 (Usp19).